The chain runs to 495 residues: UDP-glycosyltransferase 73C9 (495 aa).

23-26 is a UDP-alpha-D-glucose binding site; that stretch reads GHMI. His-24 serves as the catalytic Proton acceptor. Catalysis depends on Asp-129, which acts as the Charge relay. Residues 355–358, 373–381, and 397–398 each bind UDP-alpha-D-glucose; these read WSPQ, HCGWNSTLE, and DQ.

It belongs to the UDP-glycosyltransferase family.

In terms of biological role, possesses very weak glucosyltransferase activity toward 2,4,5-trichlorophenol (TCP), when assayed with high concentrations of TCP. This Barbarea vulgaris (Yellow rocket) protein is UDP-glycosyltransferase 73C9.